The following is a 130-amino-acid chain: L-aspartate semialdehyde sulfurtransferase iron-sulfur subunit (130 aa).

4Fe-4S ferredoxin-type domains follow at residues 72–101 (RPIH…FDET) and 102–130 (WSLC…KLGE). Positions 81, 84, 87, 91, 111, 114, 117, and 121 each coordinate [4Fe-4S] cluster.

In terms of assembly, may form a complex with MA_1821. Requires [4Fe-4S] cluster as cofactor.

It functions in the pathway amino-acid biosynthesis. Its function is as follows. Required for O-acetylhomoserine sulfhydrylase (OAHS)-independent homocysteine (Hcy) biosynthesis. Together with MA_1821, catalyzes the condensation of sulfide with aspartate semialdehyde to generate homocysteine. May be involved in the reduction of the disulfide formed in MA_1821. The chain is L-aspartate semialdehyde sulfurtransferase iron-sulfur subunit from Methanosarcina acetivorans (strain ATCC 35395 / DSM 2834 / JCM 12185 / C2A).